Reading from the N-terminus, the 58-residue chain is Large ribosomal subunit protein bL32 (58 aa).

The protein belongs to the bacterial ribosomal protein bL32 family.

The sequence is that of Large ribosomal subunit protein bL32 from Anaplasma marginale (strain Florida).